We begin with the raw amino-acid sequence, 757 residues long: 5-methyltetrahydropteroyltriglutamate--homocysteine methyltransferase (757 aa).

Residues 16–19 and lysine 112 contribute to the 5-methyltetrahydropteroyltri-L-glutamate site; that span reads RELK. L-homocysteine contacts are provided by residues 433–435 and glutamate 486; that span reads IGS. L-methionine contacts are provided by residues 433-435 and glutamate 486; that span reads IGS. Residues 517-518 and tryptophan 563 contribute to the 5-methyltetrahydropteroyltri-L-glutamate site; that span reads RC. Aspartate 601 contributes to the L-homocysteine binding site. Aspartate 601 is a binding site for L-methionine. Glutamate 607 serves as a coordination point for 5-methyltetrahydropteroyltri-L-glutamate. Zn(2+) is bound by residues histidine 643, cysteine 645, and glutamate 667. The Proton donor role is filled by histidine 696. Cysteine 728 serves as a coordination point for Zn(2+).

It belongs to the vitamin-B12 independent methionine synthase family. The cofactor is Zn(2+).

The enzyme catalyses 5-methyltetrahydropteroyltri-L-glutamate + L-homocysteine = tetrahydropteroyltri-L-glutamate + L-methionine. The protein operates within amino-acid biosynthesis; L-methionine biosynthesis via de novo pathway; L-methionine from L-homocysteine (MetE route): step 1/1. Its function is as follows. Catalyzes the transfer of a methyl group from 5-methyltetrahydrofolate to homocysteine resulting in methionine formation. This is 5-methyltetrahydropteroyltriglutamate--homocysteine methyltransferase from Pasteurella multocida (strain Pm70).